A 390-amino-acid chain; its full sequence is LL-diaminopimelate aminotransferase (390 aa).

5 residues coordinate substrate: Tyr-13, Gly-38, Lys-102, Tyr-126, and Asn-176. Pyridoxal 5'-phosphate is bound by residues 101–102 (SK), Tyr-126, Asn-176, Tyr-207, and 235–237 (SVS). Lys-238 is subject to N6-(pyridoxal phosphate)lysine. Arg-246 provides a ligand contact to pyridoxal 5'-phosphate. Arg-364 lines the substrate pocket.

Belongs to the class-I pyridoxal-phosphate-dependent aminotransferase family. LL-diaminopimelate aminotransferase subfamily. Homodimer. Pyridoxal 5'-phosphate is required as a cofactor.

The enzyme catalyses (2S,6S)-2,6-diaminopimelate + 2-oxoglutarate = (S)-2,3,4,5-tetrahydrodipicolinate + L-glutamate + H2O + H(+). It functions in the pathway amino-acid biosynthesis; L-lysine biosynthesis via DAP pathway; LL-2,6-diaminopimelate from (S)-tetrahydrodipicolinate (aminotransferase route): step 1/1. In terms of biological role, involved in the synthesis of meso-diaminopimelate (m-DAP or DL-DAP), required for both lysine and peptidoglycan biosynthesis. Catalyzes the direct conversion of tetrahydrodipicolinate to LL-diaminopimelate. Is also able to catalyze the reverse reaction in vitro, i.e. the transamination of LL-diaminopimelate with 2-oxoglutarate to produce tetrahydrodipicolinate and glutamate. Can also use m-DAP instead of LL-DAP as the amino-group donor, and oxaloacetate instead of 2-oxoglutarate as the amino-group acceptor. The sequence is that of LL-diaminopimelate aminotransferase from Moorella thermoacetica (strain ATCC 39073 / JCM 9320).